The following is a 332-amino-acid chain: MKQVQTKRDWKKLAYDVVEEKMITKEDAIAILEADDTEVLEIMNAAYIIRHHHFGKKVKLNMIINTKSGLCPEDCGYCSQSIISEAPIDKYAWLTQEKIVEGAHEAIRRKAGTYCIVASGRRPTDKEVNHVIGAVKEIRETTDLKICCCLGFLNEDQAGRLAEAGVHRYNHNLDTHANNYDSICSTHTYDDRVDTVQKAKQAGISPCSGAIFGMGETIEERAEIAFELQRIDADSIPCNFLVAVKGTPLEGQKELTPVECLKVLAMMRFVNPTKEIRISGGREINLRSVQPIGLFAANSIFVGDYLTTAGQEPTADWGMIADLGFEIEECAL.

Residues 53–282 (HFGKKVKLNM…TKEIRISGGR (230 aa)) enclose the Radical SAM core domain. The [4Fe-4S] cluster site is built by Cys-71, Cys-75, and Cys-78. Positions 115, 147, 207, and 277 each coordinate [2Fe-2S] cluster.

The protein belongs to the radical SAM superfamily. Biotin synthase family. In terms of assembly, homodimer. [4Fe-4S] cluster is required as a cofactor. It depends on [2Fe-2S] cluster as a cofactor.

It carries out the reaction (4R,5S)-dethiobiotin + (sulfur carrier)-SH + 2 reduced [2Fe-2S]-[ferredoxin] + 2 S-adenosyl-L-methionine = (sulfur carrier)-H + biotin + 2 5'-deoxyadenosine + 2 L-methionine + 2 oxidized [2Fe-2S]-[ferredoxin]. The protein operates within cofactor biosynthesis; biotin biosynthesis; biotin from 7,8-diaminononanoate: step 2/2. In terms of biological role, catalyzes the conversion of dethiobiotin (DTB) to biotin by the insertion of a sulfur atom into dethiobiotin via a radical-based mechanism. In Bacillus cereus (strain ATCC 14579 / DSM 31 / CCUG 7414 / JCM 2152 / NBRC 15305 / NCIMB 9373 / NCTC 2599 / NRRL B-3711), this protein is Biotin synthase.